Reading from the N-terminus, the 1014-residue chain is MIYLHRIYFIIVLFTLIFHGRLGFSDNNKLHEAEVRALKEIGKKLGKKDWDFNKDPCSGEGTWIVTTYTTKGFESNITCDCSFLPQNSSCHVIRIALKSQNLTGIVPPEFSKLRHLKVLDLSRNSLTGSIPKEWASMRLEDLSFMGNRLSGPFPKVLTRLTMLRNLSLEGNQFSGPIPPDIGQLVHLEKLHLPSNAFTGPLTEKLGLLKNLTDMRISDNNFTGPIPDFISNWTRILKLQMHGCGLDGPIPSSISSLTSLTDLRISDLGGKPSSFPPLKNLESIKTLILRKCKIIGPIPKYIGDLKKLKTLDLSFNLLSGEIPSSFENMKKADFIYLTGNKLTGGVPNYFVERNKNVDVSFNNFTDESSIPSHDCNRVTSNLVESFALGNKSHKGSTCFLQRMPCVHPKRYHLYKLYINCGGGEVKVDKEITYQADDEPKGASMYVLGANKRWALSSTGNFMDNDDDADEYTVQNTSRLSVNASSPSFGLYRTARVSPLSLTYYGICLGNGNYTVNLHFAEIIFTDDNTLYSLGKRLFDIYVQDQLVIKNFNIQEAARGSGKPIIKSFLVNVTDHTLKIGLRWAGKGTTGIPIRGVYGPMISAISVEPNFKPPVYYDTKDIILKVGVPVAAATLLLFIIVGVFWKKRRDKNDIDKELRGLDLQTGTFTLRQIKAATDNFDVTRKIGEGGFGSVYKGELSEGKLIAVKQLSAKSRQGNREFVNEIGMISALQHPNLVKLYGCCVEGNQLILVYEYLENNCLSRALFGKDESSRLKLDWSTRKKIFLGIAKGLTFLHEESRIKIVHRDIKASNVLLDKDLNAKISDFGLAKLNDDGNTHISTRIAGTIGYMAPEYAMRGYLTEKADVYSFGVVALEIVSGKSNTNFRPTEDFVYLLDWAYVLQERGSLLELVDPTLASDYSEEEAMLMLNVALMCTNASPTLRPTMSQVVSLIEGKTAMQELLSDPSFSTVNPKLKALRNHFWQNELSRSLSFSTSGPRTASANSLVDAEEKTGLLD.

The signal sequence occupies residues 1–23; sequence MIYLHRIYFIIVLFTLIFHGRLG. The Extracellular portion of the chain corresponds to 24–619; it reads FSDNNKLHEA…KPPVYYDTKD (596 aa). Asparagine 76, asparagine 87, and asparagine 101 each carry an N-linked (GlcNAc...) asparagine glycan. LRR repeat units lie at residues 89-112, 113-137, 139-160, 161-184, 186-207, 208-234, 256-279, 280-304, 305-327, 329-352, and 354-376; these read SCHV…EFSK, LRHL…WASM, LEDL…LTRL, TMLR…IGQL, HLEK…KLGL, LKNL…NWTR, LTSL…PLKN, LESI…IGDL, KKLK…SFEN, KKAD…FVER, and KNVD…DCNR. Asparagine 165 carries N-linked (GlcNAc...) asparagine glycosylation. Asparagine 210, asparagine 220, and asparagine 231 each carry an N-linked (GlcNAc...) asparagine glycan. N-linked (GlcNAc...) asparagine glycans are attached at residues asparagine 362, asparagine 389, asparagine 474, asparagine 481, and asparagine 511. Residues 516–539 form an LRR 12 repeat; sequence LHFAEIIFTDDNTLYSLGKRLFDI. A glycan (N-linked (GlcNAc...) asparagine) is linked at asparagine 570. The helical transmembrane segment at 620–640 threads the bilayer; that stretch reads IILKVGVPVAAATLLLFIIVG. Residues 641–1014 are Cytoplasmic-facing; the sequence is VFWKKRRDKN…DAEEKTGLLD (374 aa). Residue threonine 667 is modified to Phosphothreonine. Positions 678 to 960 constitute a Protein kinase domain; the sequence is FDVTRKIGEG…EGKTAMQELL (283 aa). ATP contacts are provided by residues 684-692 and lysine 706; that span reads IGEGGFGSV. At tyrosine 751 the chain carries Phosphotyrosine. The active-site Proton acceptor is the aspartate 805. Serine 809 and serine 838 each carry phosphoserine. Threonine 839 and threonine 844 each carry phosphothreonine. Tyrosine 852 is subject to Phosphotyrosine. Serine 989 carries the phosphoserine modification. The segment covering 989-1002 has biased composition (polar residues); that stretch reads SFSTSGPRTASANS. The disordered stretch occupies residues 989–1014; the sequence is SFSTSGPRTASANSLVDAEEKTGLLD.

This sequence belongs to the protein kinase superfamily. Ser/Thr protein kinase family.

The protein localises to the membrane. It catalyses the reaction L-seryl-[protein] + ATP = O-phospho-L-seryl-[protein] + ADP + H(+). The catalysed reaction is L-threonyl-[protein] + ATP = O-phospho-L-threonyl-[protein] + ADP + H(+). The protein is Probable LRR receptor-like serine/threonine-protein kinase At1g07650 of Arabidopsis thaliana (Mouse-ear cress).